The following is a 534-amino-acid chain: Lysophosphatidylcholine acyltransferase 1 (534 aa).

The segment at 1-22 is disordered; sequence MRLRGCGPRAAPASSAGASDAR. Residues 1–57 lie on the Cytoplasmic side of the membrane; the sequence is MRLRGCGPRAAPASSAGASDARLLAPPGRNPFVHELRLSALQKAQVALMTLTLFPVR. Over residues 7-22 the composition is skewed to low complexity; sequence GPRAAPASSAGASDAR. The helical; Signal-anchor for type II membrane protein transmembrane segment at 58-78 threads the bilayer; the sequence is LLVAAAMMLLAWPLALVASLG. Topologically, residues 79–534 are lumenal; the sequence is SAEKEPEQPP…GRKPVRKKLD (456 aa). Positions 135 to 140 match the HXXXXD motif motif; that stretch reads HSSYFD. EF-hand domains lie at 379–414 and 451–486; these read PVSDLLEDMFSLFDESGSGEVDLRECVVALSVVCRP and VAELTVTDLFRAIDQEEKGKITFADFHRFAEMYPAF. Ca(2+)-binding residues include D392, S394, S396, E398, and E403. Positions 512-534 are disordered; that stretch reads GFCADFSPENSDAGRKPVRKKLD. Basic and acidic residues predominate over residues 523–534; it reads DAGRKPVRKKLD. The short motif at 531 to 534 is the Di-lysine motif element; sequence KKLD.

Belongs to the 1-acyl-sn-glycerol-3-phosphate acyltransferase family. In terms of tissue distribution, erythrocytes.

The protein resides in the endoplasmic reticulum membrane. The protein localises to the golgi apparatus membrane. It localises to the cell membrane. Its subcellular location is the lipid droplet. The catalysed reaction is a 1-acyl-sn-glycero-3-phosphocholine + an acyl-CoA = a 1,2-diacyl-sn-glycero-3-phosphocholine + CoA. It carries out the reaction a 1-acyl-sn-glycero-3-phosphate + an acyl-CoA = a 1,2-diacyl-sn-glycero-3-phosphate + CoA. It catalyses the reaction a 1-O-alkyl-sn-glycero-3-phosphocholine + acetyl-CoA = a 1-O-alkyl-2-acetyl-sn-glycero-3-phosphocholine + CoA. The enzyme catalyses a 1-O-(1Z-alkenyl)-sn-glycero-3-phosphocholine + an acyl-CoA = a 1-O-(1Z-alkenyl)-2-acyl-sn-glycero-3-phosphocholine + CoA. The catalysed reaction is 1-acyl-sn-glycero-3-phospho-(1'-sn-glycerol) + an acyl-CoA = a 1,2-diacyl-sn-glycero-3-phospho-(1'-sn-glycerol) + CoA. It carries out the reaction 1-hexadecanoyl-sn-glycero-3-phosphocholine + (9Z)-octadecenoyl-CoA = 1-hexadecanoyl-2-(9Z-octadecenoyl)-sn-glycero-3-phosphocholine + CoA. It catalyses the reaction 1-hexadecanoyl-sn-glycero-3-phosphocholine + hexadecanoyl-CoA = 1,2-dihexadecanoyl-sn-glycero-3-phosphocholine + CoA. The enzyme catalyses 1-O-hexadecyl-sn-glycero-3-phosphocholine + hexadecanoyl-CoA = 1-O-hexadecyl-2-hexadecanoyl-sn-glycero-3-phosphocholine + CoA. The catalysed reaction is a 1-O-(1Z-alkenyl)-sn-glycero-3-phosphocholine + hexadecanoyl-CoA = 1-O-(1Z)-alkenyl-2-hexadecanoyl-sn-glycero-3-phosphocholine + CoA. It carries out the reaction 1-hexadecanoyl-sn-glycero-3-phospho-(1'-sn-glycerol) + hexadecanoyl-CoA = 1,2-dihexadecanoyl-sn-glycero-3-phospho-(1'-sn-glycerol) + CoA. It catalyses the reaction 1-dodecanoyl-sn-glycero-3-phosphocholine + hexadecanoyl-CoA = 1-dodecanoyl-2-hexadecanoyl-sn-glycero-3-phosphocholine + CoA. The enzyme catalyses 1-tetradecanoyl-sn-glycero-3-phosphocholine + hexadecanoyl-CoA = 1-tetradecanoyl-2-hexadecanoyl-sn-glycero-3-phosphocholine + CoA. The catalysed reaction is 1-O-octadecyl-sn-glycero-3-phosphocholine + hexadecanoyl-CoA = 1-O-octadecyl-2-hexadecanoyl-sn-glycero-3-phosphocholine + CoA. It carries out the reaction 1-octadecanoyl-sn-glycero-3-phosphocholine + hexadecanoyl-CoA = 1-octadecanoyl-2-hexadecanoyl-sn-glycero-3-phosphocholine + CoA. It catalyses the reaction 1-(9Z-octadecenoyl)-sn-glycero-3-phosphocholine + hexadecanoyl-CoA = 1-(9Z-octadecenoyl)-2-hexadecanoyl-sn-glycero-3-phosphocholine + CoA. The enzyme catalyses 1-eicosanoyl-sn-glycero-3-phosphocholine + hexadecanoyl-CoA = 1-eicosanoyl-2-hexadecanoyl-sn-glycero-3-phosphocholine + CoA. The catalysed reaction is hexanoyl-CoA + 1-hexadecanoyl-sn-glycero-3-phosphocholine = 1-hexadecanoyl-2-hexanoyl-sn-glycero-3-phosphocholine + CoA. It carries out the reaction octanoyl-CoA + 1-hexadecanoyl-sn-glycero-3-phosphocholine = 1-hexadecanoyl-2-octanoyl-sn-glycero-3-phosphocholine + CoA. It catalyses the reaction decanoyl-CoA + 1-hexadecanoyl-sn-glycero-3-phosphocholine = 1-hexadecanoyl-2-decanoyl-sn-glycero-3-phosphocholine + CoA. The enzyme catalyses dodecanoyl-CoA + 1-hexadecanoyl-sn-glycero-3-phosphocholine = 1-hexadecanoyl-2-dodecanoyl-sn-glycero-3-phosphocholine + CoA. The catalysed reaction is tetradecanoyl-CoA + 1-hexadecanoyl-sn-glycero-3-phosphocholine = 1-hexadecanoyl-2-tetradecanoyl-sn-glycero-3-phosphocholine + CoA. It carries out the reaction (9Z,12Z)-octadecadienoyl-CoA + 1-hexadecanoyl-sn-glycero-3-phosphocholine = 1-hexadecanoyl-2-(9Z,12Z-octadecadienoyl)-sn-glycero-3-phosphocholine + CoA. It catalyses the reaction (4Z,7Z,10Z,13Z,16Z,19Z)-docosahexaenoyl-CoA + 1-hexadecanoyl-sn-glycero-3-phosphocholine = 1-hexadecanoyl-2-(4Z,7Z,10Z,13Z,16Z,19Z-docosahexaenoyl)-sn-glycero-3-phosphocholine + CoA. The enzyme catalyses 1-hexadecanoyl-sn-glycero-3-phosphocholine + acetyl-CoA = 1-hexadecanoyl-2-acetyl-sn-glycero-3-phosphocholine + CoA. The catalysed reaction is eicosanoyl-CoA + 1-hexadecanoyl-sn-glycero-3-phosphocholine = 1-hexadecanoyl-2-eicosanoyl-sn-glycero-3-phosphocholine + CoA. It carries out the reaction 1-O-hexadecyl-sn-glycero-3-phosphocholine + acetyl-CoA = 1-O-hexadecyl-2-acetyl-sn-glycero-3-phosphocholine + CoA. It catalyses the reaction a 1-acyl-sn-glycero-3-phosphocholine + hexadecanoyl-CoA = 1-acyl-2-hexadecanoyl-sn-glycero-3-phosphocholine + CoA. The enzyme catalyses a 1-acyl-sn-glycero-3-phosphate + hexadecanoyl-CoA = 1-acyl-2-hexadecanoyl-sn-glycero-3-phosphate + CoA. The catalysed reaction is 1-acyl-sn-glycero-3-phospho-(1'-sn-glycerol) + hexadecanoyl-CoA = 1-acyl-2-hexadecanoyl-sn-glycero-3-phospho-(1'-sn-glycerol) + CoA. The protein operates within lipid metabolism; phospholipid metabolism. Functionally, exhibits acyltransferase activity. Exhibits acetyltransferase activity. Activity is calcium-independent. Catalyzes the conversion of lysophosphatidylcholine (1-acyl-sn-glycero-3-phosphocholine or LPC) into phosphatidylcholine (1,2-diacyl-sn-glycero-3-phosphocholine or PC). Catalyzes the conversion 1-acyl-sn-glycerol-3-phosphate (lysophosphatidic acid or LPA) into 1,2-diacyl-sn-glycerol-3-phosphate (phosphatidic acid or PA) by incorporating an acyl moiety at the sn-2 position of the glycerol backbone. Displays a clear preference for saturated fatty acyl-CoAs, and 1-myristoyl or 1-palmitoyl LPC as acyl donors and acceptors, respectively. Involved in platelet-activating factor (PAF) biosynthesis by catalyzing the conversion of the PAF precursor, 1-O-alkyl-sn-glycero-3-phosphocholine (lyso-PAF) into 1-O-alkyl-2-acetyl-sn-glycero-3-phosphocholine (PAF). May synthesize phosphatidylcholine in pulmonary surfactant, thereby playing a pivotal role in respiratory physiology. Involved in the regulation of lipid droplet number and size. This Homo sapiens (Human) protein is Lysophosphatidylcholine acyltransferase 1 (LPCAT1).